A 1382-amino-acid chain; its full sequence is DNA-directed RNA polymerase subunit beta (1382 aa).

The protein belongs to the RNA polymerase beta chain family. The RNAP catalytic core consists of 2 alpha, 1 beta, 1 beta' and 1 omega subunit. When a sigma factor is associated with the core the holoenzyme is formed, which can initiate transcription.

It carries out the reaction RNA(n) + a ribonucleoside 5'-triphosphate = RNA(n+1) + diphosphate. Functionally, DNA-dependent RNA polymerase catalyzes the transcription of DNA into RNA using the four ribonucleoside triphosphates as substrates. This chain is DNA-directed RNA polymerase subunit beta, found in Paracoccus denitrificans (strain Pd 1222).